We begin with the raw amino-acid sequence, 930 residues long: Dual serine/threonine and tyrosine protein kinase (930 aa).

The span at 1–14 shows a compositional bias: low complexity; that stretch reads MEGDGVPWGSEPVS. Residues 1-22 are disordered; sequence MEGDGVPWGSEPVSGPGPGGGG. 2 coiled-coil regions span residues 190–216 and 396–432; these read EEDL…MHHA and RKKE…KEEL. The 255-residue stretch at 653–907 folds into the Protein kinase domain; sequence PKLGQELGRG…PLLGIVQPML (255 aa). Residues 659–667 and lysine 682 contribute to the ATP site; that span reads LGRGQYGVV. Catalysis depends on aspartate 778, which acts as the Proton acceptor.

The protein belongs to the protein kinase superfamily. Ser/Thr protein kinase family.

The protein localises to the cytoplasm. It is found in the cell membrane. It localises to the apical cell membrane. Its subcellular location is the basolateral cell membrane. The protein resides in the cell junction. It catalyses the reaction L-seryl-[protein] + ATP = O-phospho-L-seryl-[protein] + ADP + H(+). The catalysed reaction is L-threonyl-[protein] + ATP = O-phospho-L-threonyl-[protein] + ADP + H(+). The enzyme catalyses L-tyrosyl-[protein] + ATP = O-phospho-L-tyrosyl-[protein] + ADP + H(+). Its function is as follows. Acts as a positive regulator of ERK phosphorylation downstream of fibroblast growth factor-receptor activation. Involved in the regulation of both caspase-dependent apoptosis and caspase-independent cell death. In the skin, it plays a predominant role in suppressing caspase-dependent apoptosis in response to UV stress in a range of dermal cell types. This is Dual serine/threonine and tyrosine protein kinase (DSTYK) from Pan troglodytes (Chimpanzee).